A 504-amino-acid polypeptide reads, in one-letter code: Anaerobic nitric oxide reductase transcription regulator NorR (504 aa).

Position 57 is a 4-aspartylphosphate (aspartate 57). A Sigma-54 factor interaction domain is found at 187–416 (MIGLSPGMTQ…LEHAIHRAVV (230 aa)). ATP contacts are provided by residues 215–222 (GETGTGKE) and 278–287 (ADNGTLFLDE). A DNA-binding region (H-T-H motif) is located at residues 479–498 (WAASARMLETDVANLHRLAK).

Its pathway is nitrogen metabolism; nitric oxide reduction. In terms of biological role, required for the expression of anaerobic nitric oxide (NO) reductase, acts as a transcriptional activator for at least the norVW operon. Activation also requires sigma-54. This is Anaerobic nitric oxide reductase transcription regulator NorR from Escherichia fergusonii (strain ATCC 35469 / DSM 13698 / CCUG 18766 / IAM 14443 / JCM 21226 / LMG 7866 / NBRC 102419 / NCTC 12128 / CDC 0568-73).